The sequence spans 60 residues: uncharacterized protein (60 aa).

This is an uncharacterized protein from Thermotoga maritima (strain ATCC 43589 / DSM 3109 / JCM 10099 / NBRC 100826 / MSB8).